The sequence spans 338 residues: Ketol-acid reductoisomerase (NADP(+)) (338 aa).

Positions 1–181 constitute a KARI N-terminal Rossmann domain; sequence MKVYYDKDAD…GGTKGGVIET (181 aa). Residues 24–27, R47, S52, and 82–85 contribute to the NADP(+) site; these read YGSQ and DESQ. The active site involves H107. G133 is a binding site for NADP(+). The KARI C-terminal knotted domain maps to 182–327; that stretch reads NFREETETDL…AELRAMMPWI (146 aa). D190, E194, E226, and E230 together coordinate Mg(2+). S251 contributes to the substrate binding site.

It belongs to the ketol-acid reductoisomerase family. Mg(2+) is required as a cofactor.

The catalysed reaction is (2R)-2,3-dihydroxy-3-methylbutanoate + NADP(+) = (2S)-2-acetolactate + NADPH + H(+). It catalyses the reaction (2R,3R)-2,3-dihydroxy-3-methylpentanoate + NADP(+) = (S)-2-ethyl-2-hydroxy-3-oxobutanoate + NADPH + H(+). It functions in the pathway amino-acid biosynthesis; L-isoleucine biosynthesis; L-isoleucine from 2-oxobutanoate: step 2/4. It participates in amino-acid biosynthesis; L-valine biosynthesis; L-valine from pyruvate: step 2/4. Functionally, involved in the biosynthesis of branched-chain amino acids (BCAA). Catalyzes an alkyl-migration followed by a ketol-acid reduction of (S)-2-acetolactate (S2AL) to yield (R)-2,3-dihydroxy-isovalerate. In the isomerase reaction, S2AL is rearranged via a Mg-dependent methyl migration to produce 3-hydroxy-3-methyl-2-ketobutyrate (HMKB). In the reductase reaction, this 2-ketoacid undergoes a metal-dependent reduction by NADPH to yield (R)-2,3-dihydroxy-isovalerate. The chain is Ketol-acid reductoisomerase (NADP(+)) from Chromobacterium violaceum (strain ATCC 12472 / DSM 30191 / JCM 1249 / CCUG 213 / NBRC 12614 / NCIMB 9131 / NCTC 9757 / MK).